Reading from the N-terminus, the 212-residue chain is Methylthioribulose-1-phosphate dehydratase (212 aa).

Residues His-103 and His-105 each contribute to the Zn(2+) site.

It belongs to the aldolase class II family. MtnB subfamily. The cofactor is Zn(2+).

The catalysed reaction is 5-(methylsulfanyl)-D-ribulose 1-phosphate = 5-methylsulfanyl-2,3-dioxopentyl phosphate + H2O. It participates in amino-acid biosynthesis; L-methionine biosynthesis via salvage pathway; L-methionine from S-methyl-5-thio-alpha-D-ribose 1-phosphate: step 2/6. Functionally, catalyzes the dehydration of methylthioribulose-1-phosphate (MTRu-1-P) into 2,3-diketo-5-methylthiopentyl-1-phosphate (DK-MTP-1-P). The chain is Methylthioribulose-1-phosphate dehydratase from Sorangium cellulosum (strain So ce56) (Polyangium cellulosum (strain So ce56)).